A 327-amino-acid polypeptide reads, in one-letter code: DNA-directed RNA polymerase subunit alpha (327 aa).

Positions 1–233 are alpha N-terminal domain (alpha-NTD); that stretch reads MQNSASEFLK…DQLSIFADLQ (233 aa). The tract at residues 247 to 327 is alpha C-terminal domain (alpha-CTD); it reads IDPILLRPVD…NWPPAGLEKP (81 aa).

The protein belongs to the RNA polymerase alpha chain family. Homodimer. The RNAP catalytic core consists of 2 alpha, 1 beta, 1 beta' and 1 omega subunit. When a sigma factor is associated with the core the holoenzyme is formed, which can initiate transcription.

The enzyme catalyses RNA(n) + a ribonucleoside 5'-triphosphate = RNA(n+1) + diphosphate. Functionally, DNA-dependent RNA polymerase catalyzes the transcription of DNA into RNA using the four ribonucleoside triphosphates as substrates. The chain is DNA-directed RNA polymerase subunit alpha from Chromobacterium violaceum (strain ATCC 12472 / DSM 30191 / JCM 1249 / CCUG 213 / NBRC 12614 / NCIMB 9131 / NCTC 9757 / MK).